The sequence spans 919 residues: Translocase of chloroplast 101, chloroplastic (919 aa).

Disordered regions lie at residues 20–47 (SASR…VIEG) and 64–211 (VDDE…NETR). Basic and acidic residues predominate over residues 73-88 (SENKAVVETEKVESKP). Residues 96-128 (FAEEDGDSDADAEDEDDEDDEDDDEDDDDEDDK) are compositionally biased toward acidic residues. Residues 182 to 207 (QRPNGAPSTQLTATTEENANSDTAEG) are compositionally biased toward polar residues. The region spanning 284–513 (DFACTILVLG…KLQETATPGR (230 aa)) is the AIG1-type G domain. The segment at 293-300 (GKTGVGKS) is G1. 296–301 (GVGKSA) contributes to the GTP binding site. Ser300 serves as a coordination point for Mg(2+). The G2 stretch occupies residues 319–323 (PSTNK). The tract at residues 340-343 (DTPG) is G3. Positions 412-415 (THAS) are G4. GTP is bound by residues His413 and 461 to 462 (EN). Residues 461–463 (ENH) form a G5 region. Disordered regions lie at residues 540-585 (LPDE…LTKE) and 611-650 (RRRK…PMPD). Over residues 543 to 567 (EQLDESDESDDDEEEEDSEADDYDE) the composition is skewed to acidic residues. Over residues 574–585 (LSKEELEELTKE) the composition is skewed to basic and acidic residues. Over residues 629 to 638 (AQPDEADDEA) the composition is skewed to acidic residues. Residues 641 to 650 (PAAVPVPMPD) are compositionally biased toward low complexity. The helical transmembrane segment at 893 to 914 (MVLIGIVPILRSLINCRFGFGG) threads the bilayer.

The protein belongs to the TRAFAC class TrmE-Era-EngA-EngB-Septin-like GTPase superfamily. AIG1/Toc34/Toc159-like paraseptin GTPase family. TOC159 subfamily. Part of the TOC core complex. It depends on Mg(2+) as a cofactor.

The protein resides in the plastid. Its subcellular location is the chloroplast outer membrane. Its function is as follows. GTPase involved in protein precursor import into chloroplasts. Seems to recognize chloroplast-destined precursor proteins and regulate their presentation to the translocation channel through GTP hydrolysis. Probably specialized in the import of nuclear encoded non-photosynthetic preproteins from the cytoplasm to the chloroplast. This chain is Translocase of chloroplast 101, chloroplastic, found in Physcomitrium patens (Spreading-leaved earth moss).